The chain runs to 352 residues: MSGNSFGKLFTVTTAGESHGPALVAIVDGCPAGLSLTEADIQPDIDRRKTGKSRFTSQRRESDQVKILSGVFEGVTTGTPIALLIENADQRPRDYSQIKDLFRPGHGDYTYFKKYGFRDYRGGGRASARETVMRVAAGAIAKKYLREKVNLTIQGYTAAVGAIRAERIDLSAVEKNPFFFPDEVQIPHLEQLIMKLRRDGDSIGARLNVIAKGVPCGLGEPVFDKLDADIASAMMGINAVKGVEIGDGFAVVEQKGSFHRDELSKKGFLSNHAGGTLAGISSGQDILVSLAFKPASSIRIPGKTLDINGKAVEVVTTGRHDPCVGLRAVPIAEAMLALVLMDHYLRYKAQRG.

2 residues coordinate NADP(+): Arg48 and Arg54. FMN contacts are provided by residues 125–127 (RAS), 238–239 (NA), Ala278, 293–297 (KPASS), and Arg319.

The protein belongs to the chorismate synthase family. As to quaternary structure, homotetramer. It depends on FMNH2 as a cofactor.

The enzyme catalyses 5-O-(1-carboxyvinyl)-3-phosphoshikimate = chorismate + phosphate. It functions in the pathway metabolic intermediate biosynthesis; chorismate biosynthesis; chorismate from D-erythrose 4-phosphate and phosphoenolpyruvate: step 7/7. Catalyzes the anti-1,4-elimination of the C-3 phosphate and the C-6 proR hydrogen from 5-enolpyruvylshikimate-3-phosphate (EPSP) to yield chorismate, which is the branch point compound that serves as the starting substrate for the three terminal pathways of aromatic amino acid biosynthesis. This reaction introduces a second double bond into the aromatic ring system. The sequence is that of Chorismate synthase from Coxiella burnetii (strain RSA 493 / Nine Mile phase I).